The following is a 127-amino-acid chain: Glycine cleavage system H protein (127 aa).

In terms of domain architecture, Lipoyl-binding spans 24 to 105 (TALVGITDFA…YEDGWMVKVS (82 aa)). N6-lipoyllysine is present on K65.

It belongs to the GcvH family. The glycine cleavage system is composed of four proteins: P, T, L and H. Requires (R)-lipoate as cofactor.

Its function is as follows. The glycine cleavage system catalyzes the degradation of glycine. The H protein shuttles the methylamine group of glycine from the P protein to the T protein. This chain is Glycine cleavage system H protein, found in Prosthecochloris aestuarii (strain DSM 271 / SK 413).